The chain runs to 132 residues: ATP synthase epsilon chain, cyanelle (132 aa).

Belongs to the ATPase epsilon chain family. F-type ATPases have 2 components, CF(1) - the catalytic core - and CF(0) - the membrane proton channel. CF(1) has five subunits: alpha(3), beta(3), gamma(1), delta(1), epsilon(1). CF(0) has three main subunits: a, b and c.

It localises to the plastid. It is found in the cyanelle thylakoid membrane. Functionally, produces ATP from ADP in the presence of a proton gradient across the membrane. This chain is ATP synthase epsilon chain, cyanelle, found in Cyanophora paradoxa.